Here is a 664-residue protein sequence, read N- to C-terminus: 1,4-alpha-glucan branching enzyme GlgB 2 (664 aa).

Basic and acidic residues predominate over residues 1–17 (MGGKEMRNCKELKHEKN). The disordered stretch occupies residues 1–31 (MGGKEMRNCKELKHEKNGNVTEKVGKNKGKS). Asp-342 (nucleophile) is an active-site residue. Residue Glu-395 is the Proton donor of the active site.

This sequence belongs to the glycosyl hydrolase 13 family. GlgB subfamily. As to quaternary structure, monomer.

It catalyses the reaction Transfers a segment of a (1-&gt;4)-alpha-D-glucan chain to a primary hydroxy group in a similar glucan chain.. Its pathway is glycan biosynthesis; glycogen biosynthesis. Functionally, catalyzes the formation of the alpha-1,6-glucosidic linkages in glycogen by scission of a 1,4-alpha-linked oligosaccharide from growing alpha-1,4-glucan chains and the subsequent attachment of the oligosaccharide to the alpha-1,6 position. The chain is 1,4-alpha-glucan branching enzyme GlgB 2 (glgB2) from Clostridium perfringens (strain 13 / Type A).